The chain runs to 91 residues: Small ribosomal subunit protein bS18 (91 aa).

The segment at 1-27 (MTQQSNTERKPRAKGPKRPRKPKVDPF) is disordered. The segment covering 11 to 21 (PRAKGPKRPRK) has biased composition (basic residues).

The protein belongs to the bacterial ribosomal protein bS18 family. As to quaternary structure, part of the 30S ribosomal subunit. Forms a tight heterodimer with protein bS6.

Binds as a heterodimer with protein bS6 to the central domain of the 16S rRNA, where it helps stabilize the platform of the 30S subunit. The protein is Small ribosomal subunit protein bS18 of Deinococcus geothermalis (strain DSM 11300 / CIP 105573 / AG-3a).